The following is a 147-amino-acid chain: Deoxyuridine 5'-triphosphate nucleotidohydrolase (147 aa).

Arg24 is a Mg(2+) binding site. Residues 68–70 (PRS), 82–85 (GVID), Tyr88, Gly93, Ile95, and Arg111 each bind dUTP.

Belongs to the dUTPase family.

The catalysed reaction is dUTP + H2O = dUMP + diphosphate + H(+). Functionally, this enzyme is involved in nucleotide metabolism: it produces dUMP, the immediate precursor of thymidine nucleotides and it decreases the intracellular concentration of dUTP so that uracil cannot be incorporated into DNA. This Homo sapiens (Human) protein is Deoxyuridine 5'-triphosphate nucleotidohydrolase (OPG046).